We begin with the raw amino-acid sequence, 223 residues long: Ribose-5-phosphate isomerase A (223 aa).

Substrate contacts are provided by residues Thr29 to Thr32, Asp82 to Asp85, and Lys95 to Gly98. Residue Glu104 is the Proton acceptor of the active site. A substrate-binding site is contributed by Lys122.

This sequence belongs to the ribose 5-phosphate isomerase family. Homodimer.

The catalysed reaction is aldehydo-D-ribose 5-phosphate = D-ribulose 5-phosphate. Its pathway is carbohydrate degradation; pentose phosphate pathway; D-ribose 5-phosphate from D-ribulose 5-phosphate (non-oxidative stage): step 1/1. Catalyzes the reversible conversion of ribose-5-phosphate to ribulose 5-phosphate. The chain is Ribose-5-phosphate isomerase A from Neisseria meningitidis serogroup C (strain 053442).